Reading from the N-terminus, the 361-residue chain is MAGRSNIVVSATVRDALAAGAPVVALESTLIAHGLPRPRNRDVAVELEELARARGVTPATIAVIDGVPRVGLDEPDLRRIADDANVIKLSVRDLPVACATGWTGATTVASTALLAARVGIRLFATGGLGGVHRGAGDSFDESADLVTLAAMPITVVSAGVKSILDIGATLERLETLGITVVGYRTSTFPGFYLPHTTYDLDWRVGDAGQVAATMAAADLLGLTSAIVVANPLPTDQALDPALHDRVLADALAWATERGIRGKAVTPFLLETFHRETGGASLEVNINAVRNNVAVASDIALAWAAKDRSPTDPAAPDPTAPDPAAPDPTAPDPAAPDSAAPDLAGPDPSAPDPAAVARAHRP.

Glu27 functions as the Proton donor in the catalytic mechanism. Positions 88 and 108 each coordinate substrate. Residue Asp140 participates in Mn(2+) binding. Ser142 to Asp144 is a substrate binding site. The Nucleophile role is filled by Lys161. The tract at residues Asp306 to Pro361 is disordered. A compositionally biased stretch (pro residues) spans Pro312–Ala333. Low complexity predominate over residues Ala334–Ala354.

The protein belongs to the pseudouridine-5'-phosphate glycosidase family. As to quaternary structure, homotrimer. The cofactor is Mn(2+).

It carries out the reaction D-ribose 5-phosphate + uracil = psi-UMP + H2O. In terms of biological role, catalyzes the reversible cleavage of pseudouridine 5'-phosphate (PsiMP) to ribose 5-phosphate and uracil. Functions biologically in the cleavage direction, as part of a pseudouridine degradation pathway. This is Pseudouridine-5'-phosphate glycosidase from Frankia alni (strain DSM 45986 / CECT 9034 / ACN14a).